Consider the following 473-residue polypeptide: Membrane protein TMS1 (473 aa).

Topologically, residues 1 to 6 (MGAVIS) are cytoplasmic. The helical transmembrane segment at 7–29 (LPVSMAGSFVASCFGGCCSNLVT) threads the bilayer. At 30 to 38 (KTASSLGSS) the chain is on the vacuolar side. Residues 39–61 (SLGTRLLYAVWLLLNSLISWVSY) traverse the membrane as a helical segment. The Cytoplasmic segment spans residues 62 to 81 (SANKSILWPGKTCTGTGECG). The helical transmembrane segment at 82 to 104 (FFTVHRLNFALGCLHLILALVLT) threads the bilayer. Residues 105–118 (GVKSTNDVRAALQN) lie on the Vacuolar side of the membrane. A helical transmembrane segment spans residues 119-138 (SWWSLKFILYLCLIVLSFVI). Topologically, residues 139-144 (PNDFYI) are cytoplasmic. A helical membrane pass occupies residues 145-167 (FFSKWVSVPSGAIFILVGLILLV). Over 168-194 (DFAHEWAETCISHVESEDEDSSFWQRF) the chain is Vacuolar. Residues 195 to 217 (LVLGTTSMYTASIIMTVVMYVMF) form a helical membrane-spanning segment. Topologically, residues 218–228 (CHQQCNMNQTA) are cytoplasmic. The chain crosses the membrane as a helical span at residues 229-246 (VTVNLILTVITLVLSVNP). Over 247-295 (KIQEANPKSGLAQSSMVSVYCTYLTMSAMSSEPDDKMCNPLVRSSGTRK) the chain is Vacuolar. Residues 296–318 (FSIILGSLFTFIAIAYTTTRAAA) traverse the membrane as a helical segment. Over 319 to 398 (NSAFQGTNTN…DDERTGTKYN (80 aa)) the chain is Cytoplasmic. A helical transmembrane segment spans residues 399–421 (YTLFHVIFFLATQWIAILLTINV). The Vacuolar portion of the chain corresponds to 422-435 (TQDDVGDFIPVGRT). Residues 436–458 (YFYSWVKIVSAWICYALYGWTVV) traverse the membrane as a helical segment. At 459–473 (APAIMPDRFDYENYY) the chain is on the cytoplasmic side.

It belongs to the TDE1 family.

Its subcellular location is the membrane. The polypeptide is Membrane protein TMS1 (TMS1) (Saccharomyces cerevisiae (strain ATCC 204508 / S288c) (Baker's yeast)).